Reading from the N-terminus, the 132-residue chain is Gamma-crystallin-5 (132 aa).

Residues 1–40 enclose the Beta/gamma crystallin 'Greek key' 2 domain; it reads ILYEQPSYRGHQYYLWKGEYPDFQRWMGFNDSIRSCRMSP. The tract at residues 41–45 is connecting peptide; the sequence is YHQGQ. 2 Beta/gamma crystallin 'Greek key' domains span residues 46–86 and 87–129; these read YKMR…NVFD and GNWM…RRVH.

Belongs to the beta/gamma-crystallin family. As to quaternary structure, monomer.

In terms of biological role, crystallins are the dominant structural components of the vertebrate eye lens. This chain is Gamma-crystallin-5 (cryg5), found in Xenopus laevis (African clawed frog).